Consider the following 59-residue polypeptide: UPF0434 protein HEAR2489 (59 aa).

Belongs to the UPF0434 family.

The polypeptide is UPF0434 protein HEAR2489 (Herminiimonas arsenicoxydans).